We begin with the raw amino-acid sequence, 388 residues long: MFAKGKGSAVPSDGQAREKLALYVYEYLLHVGAQKSAQTFLSEIRWEKNITLGEPPGFLHSWWCVFWDLYCAAPERRDTCEHSSEAKAFHDYSAAAAPSPVLGNIPPNDGMPGGPIPPGFFQGPPGSQPSPHAQPPPHNPSSMMGPHSQPFMSPRYAGGPRPPIRMGNQPPGGVPGTQPLLPNSMDPTRQQGHPNMGGSMQRMNPPRGMGPMGPGPQNYGSGMRPPPNSLGPAMPGINMGPGAGRPWPNPNSANSIPYSSSSPGTYVGPPGGGGPPGTPIMPSPADSTNSSDNIYTMINPVPPGGSRSNFPMGPGSDGPMGGMGGMEPHHMNGSLGSGDIDGLPKNSPNNISGISNPPGTPRDDGELGGNFLHSFQNDNYSPSMTMSV.

Residue Met-1 is modified to N-acetylmethionine. The LisH domain occupies Ala-16–Lys-48. The tract at residues Val-101 to Val-388 is disordered. Pro residues predominate over residues Gly-126–Asn-139. Asymmetric dimethylarginine is present on residues Arg-155, Arg-161, and Arg-165. 2 stretches are compositionally biased toward low complexity: residues Met-200–Met-209 and Pro-250–Gly-268. Positions Gly-272–Pro-282 are enriched in pro residues. Residues Ala-285 to Thr-296 show a composition bias toward polar residues. Over residues Gly-315–Gly-325 the composition is skewed to gly residues. The segment covering Asn-346–Pro-357 has biased composition (low complexity). Phosphoserine is present on residues Ser-347, Ser-352, and Ser-355. Thr-360 bears the Phosphothreonine mark. Positions His-373 to Val-388 are enriched in polar residues. 2 positions are modified to phosphoserine: Ser-381 and Ser-387.

As to expression, highly expressed in all hematopoietic tissues, including spleen, lymph node, peripheral blood, bone marrow, thymus, and fetal liver, with highest expression in thymus and fetal liver. Expression is also high in heart, brain, kidney, and skeletal muscle.

The protein resides in the nucleus. Its function is as follows. May be involved in transcription regulation of the alpha 2(I) collagen gene where it binds to the single-stranded polypyrimidine sequences in the promoter region. The polypeptide is Single-stranded DNA-binding protein 3 (SSBP3) (Homo sapiens (Human)).